The following is a 198-amino-acid chain: Protein GrpE (198 aa).

The segment at 1 to 56 (MVEKKKSQAEKNNQSATEEEIEKAVKGSKRDSNAADEKNSASAAASSSAVSDAEPA) is disordered. Basic and acidic residues predominate over residues 22–39 (EKAVKGSKRDSNAADEKN). Low complexity predominate over residues 40–56 (SASAAASSSAVSDAEPA).

The protein belongs to the GrpE family. As to quaternary structure, homodimer.

It localises to the cytoplasm. In terms of biological role, participates actively in the response to hyperosmotic and heat shock by preventing the aggregation of stress-denatured proteins, in association with DnaK and GrpE. It is the nucleotide exchange factor for DnaK and may function as a thermosensor. Unfolded proteins bind initially to DnaJ; upon interaction with the DnaJ-bound protein, DnaK hydrolyzes its bound ATP, resulting in the formation of a stable complex. GrpE releases ADP from DnaK; ATP binding to DnaK triggers the release of the substrate protein, thus completing the reaction cycle. Several rounds of ATP-dependent interactions between DnaJ, DnaK and GrpE are required for fully efficient folding. This chain is Protein GrpE, found in Oenococcus oeni (strain ATCC BAA-331 / PSU-1).